The sequence spans 172 residues: Protein LHCP TRANSLOCATION DEFECT (172 aa).

The N-terminal 28 residues, 1–28, are a transit peptide targeting the chloroplast; it reads MASIPCTFQLSARASSASAAAAARRSPR. The stretch at 114–146 is one ANK repeat; sequence PVDILLMLAASEGDKPKLEELLRAGAKYDVKDV.

The protein resides in the plastid. Its subcellular location is the chloroplast. Functionally, involved in the import of light-harvesting complex proteins (LHCP) and subsequent routing of these proteins to the chloroplast signal recognition particle (SRP) pathway. The protein is Protein LHCP TRANSLOCATION DEFECT (LTD) of Oryza sativa subsp. indica (Rice).